Here is a 1675-residue protein sequence, read N- to C-terminus: Clathrin heavy chain 1 (1675 aa).

Position 2 is an N-acetylalanine (Ala2). A globular terminal domain region spans residues Ala2–Tyr479. 7 WD40-like repeat regions span residues Asn24–Ser67, Ala68–Asp107, Val108–Ala149, Gly150–Glu195, Gly196–Gln257, Asn258–Glu301, and Thr302–Glu330. A Phosphoserine modification is found at Ser67. Phosphothreonine is present on Thr105. A Phosphotyrosine modification is found at Tyr184. Thr394 is modified (phosphothreonine). A binding site for the uncoating ATPase, involved in lattice disassembly region spans residues Glu449–Asp465. The interval Leu480–Arg523 is flexible linker. The tract at residues Ile524–Tyr634 is distal segment. Positions Ile524 to Met1675 are heavy chain arm. CHCR repeat units follow at residues Val537–Val683, Ala686–Val828, Ile833–Asp972, Leu979–Ala1124, Tyr1128–Ala1269, Leu1274–Asn1420, and Leu1423–Phe1566. Tyr634 is subject to Phosphotyrosine. Residues Ala639–Met1675 are proximal segment. Residue Lys737 is modified to N6-succinyllysine. Lys856 carries the N6-acetyllysine modification. A Phosphotyrosine modification is found at Tyr899. The residue at position 1167 (Ser1167) is a Phosphoserine. The residue at position 1206 (Tyr1206) is a Phosphotyrosine. Residues Ala1213–Lys1522 are involved in binding clathrin light chain. Ser1229 bears the Phosphoserine mark. Lys1441 is modified (N6-acetyllysine; alternate). Position 1441 is an N6-succinyllysine; alternate (Lys1441). Residues Tyr1477 and Tyr1487 each carry the phosphotyrosine modification. Ser1494 bears the Phosphoserine mark. Lys1501 is modified (N6-acetyllysine). Residues Ala1550–Met1675 are trimerization.

Belongs to the clathrin heavy chain family. As to quaternary structure, clathrin triskelions, composed of 3 heavy chains and 3 light chains, are the basic subunits of the clathrin coat. In the presence of light chains, hub assembly is influenced by both the pH and the concentration of calcium. Interacts with HIP1. Interacts with DENND1A, DENND1B and DENND1C. Interacts with OCRL. Interacts with ERBB2. Interacts with FKBP6. Interacts with CKAP5 and TACC3 forming the TACC3/ch-TOG/clathrin complex located at spindle inter-microtubules bridges; the complex implicates clathrin triskelions; TACC3 and CLTC are proposed to form a composite microtubule interaction surface. Interacts with ATG16L1 (via N-terminus). Interacts with RFTN1; the interaction occurs in response to pathogens. Interacts with TMEM106B (via N-terminus). Interacts with DNAJC6; this interaction produces a local change in heavy-chain contacts, creating a detectable global distortion of the clathrin coat and leads to the recruitment of HSPA8.

The protein localises to the cytoplasmic vesicle membrane. Its subcellular location is the membrane. It is found in the coated pit. The protein resides in the melanosome. It localises to the cytoplasm. The protein localises to the cytoskeleton. Its subcellular location is the spindle. In terms of biological role, clathrin is the major protein of the polyhedral coat of coated pits and vesicles. Two different adapter protein complexes link the clathrin lattice either to the plasma membrane or to the trans-Golgi network. Acts as a component of the TACC3/ch-TOG/clathrin complex proposed to contribute to stabilization of kinetochore fibers of the mitotic spindle by acting as inter-microtubule bridge. The TACC3/ch-TOG/clathrin complex is required for the maintenance of kinetochore fiber tension. Plays a role in early autophagosome formation. Interaction with DNAJC6 mediates the recruitment of HSPA8 to the clathrin lattice and creates local destabilization of the lattice promoting uncoating. This is Clathrin heavy chain 1 from Bos taurus (Bovine).